The following is a 61-amino-acid chain: Large ribosomal subunit protein uL30 (61 aa).

The protein belongs to the universal ribosomal protein uL30 family. In terms of assembly, part of the 50S ribosomal subunit.

The chain is Large ribosomal subunit protein uL30 from Exiguobacterium sibiricum (strain DSM 17290 / CCUG 55495 / CIP 109462 / JCM 13490 / 255-15).